Reading from the N-terminus, the 205-residue chain is Guanylate kinase (205 aa).

The Guanylate kinase-like domain occupies 18–196; it reads PKLFTISAPA…AYQVLRSIFI (179 aa). An ATP-binding site is contributed by 25 to 32; that stretch reads APAGAGKT.

The protein belongs to the guanylate kinase family.

It localises to the cytoplasm. It carries out the reaction GMP + ATP = GDP + ADP. Essential for recycling GMP and indirectly, cGMP. The protein is Guanylate kinase (gmk) of Chlamydia muridarum (strain MoPn / Nigg).